Reading from the N-terminus, the 184-residue chain is Endoribonuclease YbeY (184 aa).

Zn(2+)-binding residues include His146, His150, and His156.

It belongs to the endoribonuclease YbeY family. Zn(2+) is required as a cofactor.

The protein localises to the cytoplasm. Its function is as follows. Single strand-specific metallo-endoribonuclease involved in late-stage 70S ribosome quality control and in maturation of the 3' terminus of the 16S rRNA. This Nostoc sp. (strain PCC 7120 / SAG 25.82 / UTEX 2576) protein is Endoribonuclease YbeY.